A 441-amino-acid chain; its full sequence is FBD-associated F-box protein At5g18780 (441 aa).

The F-box domain maps to 10–56; it reads EDRISILPEPLLCHILSFLRTKDSVRTSVLSSRWRDLWLWVPRLDLD. Residues 366–410 enclose the FBD domain; it reads LPRCLISSLASVDIESPITDKATELKLVSYLLENSTTLKKLVLRL.

In Arabidopsis thaliana (Mouse-ear cress), this protein is FBD-associated F-box protein At5g18780.